The primary structure comprises 497 residues: 3-ketoacyl-CoA synthase 6 (497 aa).

A run of 2 helical transmembrane segments spans residues 25 to 45 (LVNHFLSFLLIPIMAIVAVEL) and 64 to 84 (LVQVLCSSFFVIFISTVYFMS). The 290-residue stretch at 81-370 (YFMSKPRTIY…FLTSLIGRKI (290 aa)) folds into the FAE domain. Catalysis depends on residues cysteine 225, histidine 304, histidine 388, histidine 392, histidine 421, and asparagine 425.

This sequence belongs to the thiolase-like superfamily. Chalcone/stilbene synthases family. In epidermal cells of aerial tissues and in the tapetum of anthers near maturity. Expressed in siliques, flowers and leaves.

Its subcellular location is the endoplasmic reticulum membrane. It catalyses the reaction a very-long-chain acyl-CoA + malonyl-CoA + H(+) = a very-long-chain 3-oxoacyl-CoA + CO2 + CoA. It participates in lipid metabolism; fatty acid biosynthesis. Strongly inhibited by metazachlor and mefluidide. In terms of biological role, contributes to cuticular wax and suberin biosynthesis. Involved in both decarbonylation and acyl-reduction wax synthesis pathways. Required for elongation of C24 fatty acids, an essential step of the cuticular wax production. Major condensing enzyme for stem wax and pollen coat lipid biosynthesis. The polypeptide is 3-ketoacyl-CoA synthase 6 (Arabidopsis thaliana (Mouse-ear cress)).